A 366-amino-acid chain; its full sequence is Isocitrate dehydrogenase [NAD] subunit alpha, mitochondrial (366 aa).

The transit peptide at 1-27 directs the protein to the mitochondrion; it reads MAGPAWISKVSRLLGAFHNPKQVTRGF. Residue Lys-77 is modified to N6-succinyllysine. Thr-101 carries the phosphothreonine modification. Substrate-binding residues include Arg-115, Arg-125, and Arg-146. Lys-223 carries the N6-acetyllysine modification. Positions 233, 257, and 261 each coordinate Mg(2+). Position 343 is an N6-acetyllysine; alternate (Lys-343). Lys-343 is modified (N6-succinyllysine; alternate). Lys-350 is subject to N6-succinyllysine.

It belongs to the isocitrate and isopropylmalate dehydrogenases family. In terms of assembly, heterooligomer of subunits alpha (IDH3A), beta (IDH3B), and gamma (IDH3G) in the apparent ratio of 2:1:1. The heterodimer containing one IDH3A and one IDH3B subunit and the heterodimer containing one IDH3A and one IDH3G subunit assemble into a heterotetramer (which contains two subunits of IDH3A, one of IDH3B and one of IDH3G) and further into the heterooctamer. It depends on Mg(2+) as a cofactor. The cofactor is Mn(2+).

It localises to the mitochondrion. It catalyses the reaction D-threo-isocitrate + NAD(+) = 2-oxoglutarate + CO2 + NADH. With respect to regulation, the heterotetramer and the heterodimer composed of IDH3A and IDH3G subunits can be allosterically activated by citrate (CIT) or/and ADP, and the two activators can act independently or synergistically. The heterodimer composed of IDH3A and IDH3B subunits cannot be allosterically regulated and the allosteric regulation of the heterotetramer is through the IDH3G subunit and not the IDH3B subunit. The IDH3G subunit contains the allosteric site which consists of a CIT-binding site and an ADP-binding site, and the binding of CIT and ADP causes conformational changes at the allosteric site which are transmitted to the active site in the catalytic subunit (IDH3A) through a cascade of conformational changes at the heterodimer interface, leading to stabilization of the isocitrate-binding at the active site and thus activation of the enzyme. ATP can activate the heterotetramer and the heterodimer composed of IDH3A and IDH3G subunits at low concentrations but inhibits their activities at high concentrations, whereas ATP exhibits only inhibitory effect on the heterodimer composed of IDH3A and IDH3B subunits. In terms of biological role, catalytic subunit of the enzyme which catalyzes the decarboxylation of isocitrate (ICT) into alpha-ketoglutarate. The heterodimer composed of the alpha (IDH3A) and beta (IDH3B) subunits and the heterodimer composed of the alpha (IDH3A) and gamma (IDH3G) subunits, have considerable basal activity but the full activity of the heterotetramer (containing two subunits of IDH3A, one of IDH3B and one of IDH3G) requires the assembly and cooperative function of both heterodimers. The chain is Isocitrate dehydrogenase [NAD] subunit alpha, mitochondrial from Homo sapiens (Human).